Reading from the N-terminus, the 195-residue chain is Dephospho-CoA kinase (195 aa).

One can recognise a DPCK domain in the interval 2-195 (IISLTGGIGV…DIVDSLNLNT (194 aa)). Residue 10-15 (GVGKSF) coordinates ATP.

It belongs to the CoaE family.

Its subcellular location is the cytoplasm. The catalysed reaction is 3'-dephospho-CoA + ATP = ADP + CoA + H(+). It functions in the pathway cofactor biosynthesis; coenzyme A biosynthesis; CoA from (R)-pantothenate: step 5/5. Its function is as follows. Catalyzes the phosphorylation of the 3'-hydroxyl group of dephosphocoenzyme A to form coenzyme A. The protein is Dephospho-CoA kinase of Wolbachia pipientis wMel.